The chain runs to 252 residues: Imidazole glycerol phosphate synthase subunit HisF (252 aa).

Residues Asp-11 and Asp-130 contribute to the active site.

The protein belongs to the HisA/HisF family. Heterodimer of HisH and HisF.

Its subcellular location is the cytoplasm. The enzyme catalyses 5-[(5-phospho-1-deoxy-D-ribulos-1-ylimino)methylamino]-1-(5-phospho-beta-D-ribosyl)imidazole-4-carboxamide + L-glutamine = D-erythro-1-(imidazol-4-yl)glycerol 3-phosphate + 5-amino-1-(5-phospho-beta-D-ribosyl)imidazole-4-carboxamide + L-glutamate + H(+). It functions in the pathway amino-acid biosynthesis; L-histidine biosynthesis; L-histidine from 5-phospho-alpha-D-ribose 1-diphosphate: step 5/9. Functionally, IGPS catalyzes the conversion of PRFAR and glutamine to IGP, AICAR and glutamate. The HisF subunit catalyzes the cyclization activity that produces IGP and AICAR from PRFAR using the ammonia provided by the HisH subunit. The polypeptide is Imidazole glycerol phosphate synthase subunit HisF (Staphylococcus aureus (strain USA300)).